We begin with the raw amino-acid sequence, 985 residues long: Bifunctional glutamine synthetase adenylyltransferase/adenylyl-removing enzyme (985 aa).

The segment at 1-460 (MSLPSLADFP…HFRQVIADPD (460 aa)) is adenylyl removase. The adenylyl transferase stretch occupies residues 476–985 (GGEWLPLWEE…MRIWAQMGLS (510 aa)).

This sequence belongs to the GlnE family. Mg(2+) is required as a cofactor.

It catalyses the reaction [glutamine synthetase]-O(4)-(5'-adenylyl)-L-tyrosine + phosphate = [glutamine synthetase]-L-tyrosine + ADP. The enzyme catalyses [glutamine synthetase]-L-tyrosine + ATP = [glutamine synthetase]-O(4)-(5'-adenylyl)-L-tyrosine + diphosphate. Its function is as follows. Involved in the regulation of glutamine synthetase GlnA, a key enzyme in the process to assimilate ammonia. When cellular nitrogen levels are high, the C-terminal adenylyl transferase (AT) inactivates GlnA by covalent transfer of an adenylyl group from ATP to specific tyrosine residue of GlnA, thus reducing its activity. Conversely, when nitrogen levels are low, the N-terminal adenylyl removase (AR) activates GlnA by removing the adenylyl group by phosphorolysis, increasing its activity. The regulatory region of GlnE binds the signal transduction protein PII (GlnB) which indicates the nitrogen status of the cell. This Pseudomonas syringae pv. tomato (strain ATCC BAA-871 / DC3000) protein is Bifunctional glutamine synthetase adenylyltransferase/adenylyl-removing enzyme.